The chain runs to 325 residues: D-xylose 1-dehydrogenase (NADP(+)) 2 (325 aa).

Residues 1–22 (MMFGILGTAGIGVKSVIPAVQA) form the signal peptide.

The protein belongs to the Gfo/Idh/MocA family. In terms of assembly, homotetramer.

It localises to the secreted. It carries out the reaction D-xylose + NADP(+) = D-xylono-1,5-lactone + NADPH + H(+). In terms of biological role, NADP-dependent D-xylose dehydrogenase involved in the degradation of D-xylose, a major component of hemicelluloses such as xylan. Even if it shows D-xylose dehydrogenase activity, it is not essential for D-xylose degradation. The chain is D-xylose 1-dehydrogenase (NADP(+)) 2 from Haloferax volcanii (strain ATCC 29605 / DSM 3757 / JCM 8879 / NBRC 14742 / NCIMB 2012 / VKM B-1768 / DS2) (Halobacterium volcanii).